Consider the following 519-residue polypeptide: MELFLDPSTWAGLLTLIILEIVLGIDNLVFVAILSEKLPPCKQDKARLIGLSFALFMRLGLLALMSWMVTLTSEIISNKYFSFSGRDLILLFGGLFLLFKATIELHERLDNDIQKNENNKHYAGFWTIVIQIVILDSIFSLDAIITAVGTINNLPIMMIAVVIAMVLMLIASKPLTKFINLHQTVVVLCLSFLLMIGCNLVSEALGFYVPKGYLYAAIGFSIIIEIFNQIARRNFMLHQSRRPMRQRAAEAILRLMIGDQFRNTTTNISTKNKDKEKIRNRTTDTESFKEEERYMINGVLTLAARSIRSIMTPRNEISWVNIYQPKNKIRSQLLDTPHSLFPVCKGQLDEVIGIVRAKELLVALERTINIIDFSSTTLPIIIPDTLDPINLLGVLRRAKGSLVIVTNEFGAVQGLITPLDVLEAIAGEFPDADETPDIIFEKDSWLVKGGTDLHSLQQCLNITNLIKQENSYASLAGLLIAQKGQLPLPGETIVIPPLRFYILEATQYRINLVRITKQH.

Helical transmembrane passes span 13–35, 48–70, 80–102, 123–145, 150–172, 185–207, and 212–231; these read LLTL…AILS, LIGL…WMVT, YFSF…FKAT, AGFW…DAII, TINN…LIAS, VVVL…ALGF, and GYLY…NQIA. CBS domains are found at residues 311–373 and 374–434; these read MTPR…IIDF and SSTT…DADE.

Belongs to the UPF0053 family.

It localises to the cell membrane. The sequence is that of UPF0053 protein bbp_300 from Buchnera aphidicola subsp. Baizongia pistaciae (strain Bp).